The primary structure comprises 430 residues: Trigger factor (430 aa).

The PPIase FKBP-type domain occupies 163 to 248 (GNIAIIDFKG…VKEIKVKEIP (86 aa)).

The protein belongs to the FKBP-type PPIase family. Tig subfamily.

The protein localises to the cytoplasm. The catalysed reaction is [protein]-peptidylproline (omega=180) = [protein]-peptidylproline (omega=0). Functionally, involved in protein export. Acts as a chaperone by maintaining the newly synthesized protein in an open conformation. Functions as a peptidyl-prolyl cis-trans isomerase. The sequence is that of Trigger factor from Clostridium kluyveri (strain NBRC 12016).